A 245-amino-acid polypeptide reads, in one-letter code: Probable phosphatase YcdX (245 aa).

Positions 7, 9, 15, 40, 73, 101, 131, 192, and 194 each coordinate Zn(2+).

It belongs to the PHP family. In terms of assembly, homotrimer. Zn(2+) is required as a cofactor.

The protein is Probable phosphatase YcdX of Escherichia coli O139:H28 (strain E24377A / ETEC).